We begin with the raw amino-acid sequence, 141 residues long: Large ribosomal subunit protein uL16 (141 aa).

The span at 1-17 (MLQPKRTKYRKVQKGRM) shows a compositional bias: basic residues. The interval 1–29 (MLQPKRTKYRKVQKGRMKGNSQRGHELSN) is disordered.

The protein belongs to the universal ribosomal protein uL16 family. Part of the 50S ribosomal subunit.

Functionally, binds 23S rRNA and is also seen to make contacts with the A and possibly P site tRNAs. The sequence is that of Large ribosomal subunit protein uL16 from Flavobacterium johnsoniae (strain ATCC 17061 / DSM 2064 / JCM 8514 / BCRC 14874 / CCUG 350202 / NBRC 14942 / NCIMB 11054 / UW101) (Cytophaga johnsonae).